A 396-amino-acid polypeptide reads, in one-letter code: MTKSEDIIKKTEHYGAPNYKPLPIVISEAEGIWITDPEGNKYMDMLAAYSAVNQGHRHPKVIEALKEQADKVTLVSRAFNSDNLGDWYEKVSELTGKEKVLPMNTGAEAVETAVKAARRWAYEHKDIEPDKAEIIAFNGNFHGRTMAPVSLSSEAEYQRGYGPLLEGFLKVDFGDVDQLKDAINENTAAILVEPIQGEAGINVPPEGYLKEIRKLADENNILFIADEIQSGLGRSGKTFATDWDGVKLDVYILGKALGGGVLPISAVAADSEVLDVFTPGSHGSTFGGNPLAAAVSIAALDVLEDEKLAERSRELGEYFQDELKKIDNPVIKEVRGRGLFIGVELNEDARPYAEALKEEGLLCKETHDTVIRFAPPLIITKEEIDDALERIKKVFS.

Lysine 255 is subject to N6-(pyridoxal phosphate)lysine.

The protein belongs to the class-III pyridoxal-phosphate-dependent aminotransferase family. OAT subfamily. Pyridoxal 5'-phosphate is required as a cofactor.

It is found in the cytoplasm. The enzyme catalyses a 2-oxocarboxylate + L-ornithine = L-glutamate 5-semialdehyde + an L-alpha-amino acid. Its pathway is amino-acid biosynthesis; L-proline biosynthesis; L-glutamate 5-semialdehyde from L-ornithine: step 1/1. Catalyzes the interconversion of ornithine to glutamate semialdehyde. This is Ornithine aminotransferase from Staphylococcus carnosus (strain TM300).